The chain runs to 876 residues: DNA mismatch repair protein MutS (876 aa).

626–633 (GPNMGGKS) contributes to the ATP binding site.

Belongs to the DNA mismatch repair MutS family.

In terms of biological role, this protein is involved in the repair of mismatches in DNA. It is possible that it carries out the mismatch recognition step. This protein has a weak ATPase activity. In Bordetella bronchiseptica (strain ATCC BAA-588 / NCTC 13252 / RB50) (Alcaligenes bronchisepticus), this protein is DNA mismatch repair protein MutS.